The chain runs to 1020 residues: Probable beta-galactosidase B (1020 aa).

The N-terminal stretch at 1–22 is a signal peptide; the sequence is MLISKTVLSGLALGASFVGVSA. N25 carries N-linked (GlcNAc...) asparagine glycosylation. Position 90 (Y90) interacts with substrate. A glycan (N-linked (GlcNAc...) asparagine) is linked at N111. Substrate contacts are provided by N135, A136, and E137. The N-linked (GlcNAc...) asparagine glycan is linked to N172. N195 serves as a coordination point for substrate. The active-site Proton donor is E196. N-linked (GlcNAc...) asparagine glycans are attached at residues N210 and N251. Y264 is a binding site for substrate. Cysteines 270 and 323 form a disulfide. A glycan (N-linked (GlcNAc...) asparagine) is linked at N271. The active-site Nucleophile is the E307. Residue Y372 participates in substrate binding. N-linked (GlcNAc...) asparagine glycans are attached at residues N410, N455, N549, N596, N625, N702, N747, N785, N819, N880, and N919.

The protein belongs to the glycosyl hydrolase 35 family.

Its subcellular location is the secreted. The enzyme catalyses Hydrolysis of terminal non-reducing beta-D-galactose residues in beta-D-galactosides.. Cleaves beta-linked terminal galactosyl residues from gangliosides, glycoproteins, and glycosaminoglycans. The sequence is that of Probable beta-galactosidase B (lacB) from Aspergillus flavus (strain ATCC 200026 / FGSC A1120 / IAM 13836 / NRRL 3357 / JCM 12722 / SRRC 167).